Consider the following 468-residue polypeptide: 6-phospho-beta-galactosidase (468 aa).

D-galactose 6-phosphate contacts are provided by Gln19, His116, Asn159, Glu160, and Asn297. Glu160 serves as the catalytic Proton donor. Glu375 functions as the Nucleophile in the catalytic mechanism. The D-galactose 6-phosphate site is built by Ser428, Trp429, Lys435, and Tyr437.

It belongs to the glycosyl hydrolase 1 family.

It carries out the reaction a 6-phospho-beta-D-galactoside + H2O = D-galactose 6-phosphate + an alcohol. Its pathway is carbohydrate metabolism; lactose degradation; D-galactose 6-phosphate and beta-D-glucose from lactose 6-phosphate: step 1/1. The polypeptide is 6-phospho-beta-galactosidase (Streptococcus sanguinis (strain SK36)).